A 221-amino-acid polypeptide reads, in one-letter code: Urease accessory protein UreE (221 aa).

The segment covering 171 to 180 (HHGHDHDHGH) has biased composition (basic and acidic residues). The tract at residues 171-221 (HHGHDHDHGHSHSHSHSHSHSHSHSHDHDHDHDHEHDVKGHVHGPGCGHKH) is disordered. Basic residues predominate over residues 181–193 (SHSHSHSHSHSHS). Residues 194–210 (HSHDHDHDHDHEHDVKG) are compositionally biased toward basic and acidic residues.

This sequence belongs to the UreE family.

Its subcellular location is the cytoplasm. Involved in urease metallocenter assembly. Binds nickel. Probably functions as a nickel donor during metallocenter assembly. This chain is Urease accessory protein UreE, found in Cupriavidus pinatubonensis (strain JMP 134 / LMG 1197) (Cupriavidus necator (strain JMP 134)).